We begin with the raw amino-acid sequence, 327 residues long: Malate dehydrogenase (327 aa).

11-17 is an NAD(+) binding site; sequence GAAGQIS. Residues arginine 92 and arginine 98 each contribute to the substrate site. Residues asparagine 105, glutamine 112, and 129–131 each bind NAD(+); that span reads VGN. Residues asparagine 131 and arginine 162 each coordinate substrate. Catalysis depends on histidine 187, which acts as the Proton acceptor.

Belongs to the LDH/MDH superfamily. MDH type 2 family.

The catalysed reaction is (S)-malate + NAD(+) = oxaloacetate + NADH + H(+). Functionally, catalyzes the reversible oxidation of malate to oxaloacetate. The sequence is that of Malate dehydrogenase from Teredinibacter turnerae (strain ATCC 39867 / T7901).